Consider the following 448-residue polypeptide: MTRKYFGTDGVRGKVGVSPITPDFVMRLGYAAGSVLTKFETTKTPGSRPTVLIGKDTRISGYMLEAALEAGFSAAGVDVMLAGPVPTPAVAYLTRALRLSAGVVISASHNPYDDNGIKFFSASGNKLADATELEIEAALDVPMSCVASEKLGRVKRLDDARGRYIEFCKSTFPNELDLRGTKIVVDCAHGAAYHIAPDVFHELGAEVVAIGNQPSGFNINDKVGATAPAALVEAVRANQADIGIALDGDADRLIVVDASGRIFTGDEMLYIMVKDRMSVQAVAGAVGTLMTNMALEVAFRKMGIGFVRANVGDRYVLEALQERGWLLGGEGSGHMLFLDKHTTGDGIISALQILSALKRSGKTLAQLTADIAMFPQTLINVKVRPGFDWKKNAGLLAEKEQVEAELGDEGRVLIRASGTEPLIRVMVEAKNGEMADKMARRIAATLTV.

Ser108 (phosphoserine intermediate) is an active-site residue. Mg(2+) contacts are provided by Ser108, Asp247, Asp249, and Asp251. Position 108 is a phosphoserine (Ser108).

The protein belongs to the phosphohexose mutase family. It depends on Mg(2+) as a cofactor. In terms of processing, activated by phosphorylation.

It catalyses the reaction alpha-D-glucosamine 1-phosphate = D-glucosamine 6-phosphate. In terms of biological role, catalyzes the conversion of glucosamine-6-phosphate to glucosamine-1-phosphate. The sequence is that of Phosphoglucosamine mutase from Herminiimonas arsenicoxydans.